A 172-amino-acid chain; its full sequence is ATP-dependent kinase-like protein notR' (172 aa).

Belongs to the YFH7 family.

Its function is as follows. ATP-dependent kinase-like protein; part of the gene cluster that mediates the biosynthesis of notoamide, a fungal indole alkaloid that belongs to a family of natural products containing a characteristic bicyclo[2.2.2]diazaoctane core. The first step of notoamide biosynthesis involves coupling of L-proline and L-tryptophan by the bimodular NRPS notE', to produce cyclo-L-tryptophan-L-proline called brevianamide F. The reverse prenyltransferase notF' then acts as a deoxybrevianamide E synthase and converts brevianamide F to deoxybrevianamide E via reverse prenylation at C-2 of the indole ring leading to the bicyclo[2.2.2]diazaoctane core. Deoxybrevianamide E is further hydroxylated at C-6 of the indole ring, likely catalyzed by the cytochrome P450 monooxygenase notG', to yield 6-hydroxy-deoxybrevianamide E. 6-hydroxy-deoxybrevianamide E is a specific substrate of the prenyltransferase notC' for normal prenylation at C-7 to produce 6-hydroxy-7-prenyl-deoxybrevianamide, also called notoamide S. As the proposed pivotal branching point in notoamide biosynthesis, notoamide S can be diverted to notoamide E through an oxidative pyran ring closure putatively catalyzed by either notH' cytochrome P450 monooxygenase or the notD' FAD-linked oxidoreductase. This step would be followed by an indole 2,3-epoxidation-initiated pinacol-like rearrangement catalyzed by the notB' FAD-dependent monooxygenase leading to the formation of notoamide C and notoamide D. On the other hand notoamide S is converted to notoamide T by notH' (or notD'), a bifunctional oxidase that also functions as the intramolecular Diels-Alderase responsible for generation of (-)-notoamide T. To generate antipodal (+)-notoaminide T, notH (or notD) in Aspergillus strain MF297-2 is expected to catalyze a Diels-Alder reaction leading to the opposite stereochemistry. The remaining oxidoreductase notD' (or notH') likely catalyzes the oxidative pyran ring formation to yield (-)-stephacidin A. The FAD-dependent monooxygenase notI' is highly similar to notB' and is predicted to catalyze a similar conversion from (-)-stephacidin A to (+)-notoamide B via the 2,3-epoxidation of (-)-stephacidin A followed by a pinacol-type rearrangement. Finally, it remains unclear which enzyme could be responsible for the final hydroxylation steps leading to notoamide A and sclerotiamide. The function of notQ' in the notoamide biosynthesis has not been determined yet. This is ATP-dependent kinase-like protein notR' from Aspergillus versicolor.